A 651-amino-acid chain; its full sequence is Acetyl-coenzyme A synthetase (651 aa).

CoA-binding positions include 191-194, Thr311, and Asn335; that span reads RGGK. Residues 387–389, 411–416, Asp500, and Arg515 each bind ATP; these read GEP and DTWWQT. A CoA-binding site is contributed by Ser523. Arg526 contributes to the ATP binding site. Residues Val537, His539, and Val542 each coordinate Mg(2+). Arg584 serves as a coordination point for CoA. The residue at position 609 (Lys609) is an N6-acetyllysine.

The protein belongs to the ATP-dependent AMP-binding enzyme family. It depends on Mg(2+) as a cofactor. In terms of processing, acetylated. Deacetylation by the SIR2-homolog deacetylase activates the enzyme.

It catalyses the reaction acetate + ATP + CoA = acetyl-CoA + AMP + diphosphate. In terms of biological role, catalyzes the conversion of acetate into acetyl-CoA (AcCoA), an essential intermediate at the junction of anabolic and catabolic pathways. AcsA undergoes a two-step reaction. In the first half reaction, AcsA combines acetate with ATP to form acetyl-adenylate (AcAMP) intermediate. In the second half reaction, it can then transfer the acetyl group from AcAMP to the sulfhydryl group of CoA, forming the product AcCoA. This is Acetyl-coenzyme A synthetase from Pseudomonas savastanoi pv. phaseolicola (strain 1448A / Race 6) (Pseudomonas syringae pv. phaseolicola (strain 1448A / Race 6)).